The sequence spans 427 residues: tRNA(Ile)-lysidine synthase (427 aa).

18–23 (SGGLDS) is a binding site for ATP.

It belongs to the tRNA(Ile)-lysidine synthase family.

The protein resides in the cytoplasm. It catalyses the reaction cytidine(34) in tRNA(Ile2) + L-lysine + ATP = lysidine(34) in tRNA(Ile2) + AMP + diphosphate + H(+). Ligates lysine onto the cytidine present at position 34 of the AUA codon-specific tRNA(Ile) that contains the anticodon CAU, in an ATP-dependent manner. Cytidine is converted to lysidine, thus changing the amino acid specificity of the tRNA from methionine to isoleucine. The sequence is that of tRNA(Ile)-lysidine synthase from Pseudomonas putida (strain ATCC 47054 / DSM 6125 / CFBP 8728 / NCIMB 11950 / KT2440).